The primary structure comprises 111 residues: BET1-like protein (111 aa).

Over 1–86 (MADWARAQSP…MARSGRDNRK (86 aa)) the chain is Cytoplasmic. 2 positions are modified to phosphoserine: Ser9 and Ser37. Residues 15–77 (EILDRENKRM…TGSVKRFSTM (63 aa)) form the t-SNARE coiled-coil homology domain. Residues 87–107 (LLCGMAVGLIVAFFILSYFLS) form a helical; Anchor for type IV membrane protein membrane-spanning segment. Residues 108–111 (RART) are Lumenal-facing.

As to quaternary structure, component of a SNARE complex consisting of STX5, YKT6, GOSR1 and BET1L. Interacts with STX5.

It is found in the golgi apparatus membrane. It localises to the golgi apparatus. The protein localises to the trans-Golgi network membrane. Its function is as follows. Vesicle SNARE required for targeting and fusion of retrograde transport vesicles with the Golgi complex. Required for the integrity of the Golgi complex. The polypeptide is BET1-like protein (Pongo abelii (Sumatran orangutan)).